The following is a 910-amino-acid chain: Leucine--tRNA ligase (910 aa).

The short motif at 42 to 52 is the 'HIGH' region element; it reads PYPSGKLHMGH. The 'KMSKS' region motif lies at 668-672; that stretch reads KMSKS. ATP is bound at residue Lys-671.

The protein belongs to the class-I aminoacyl-tRNA synthetase family.

Its subcellular location is the cytoplasm. The enzyme catalyses tRNA(Leu) + L-leucine + ATP = L-leucyl-tRNA(Leu) + AMP + diphosphate. This is Leucine--tRNA ligase from Neisseria meningitidis serogroup A / serotype 4A (strain DSM 15465 / Z2491).